The following is a 146-amino-acid chain: Hemoglobin subunit beta-1 (146 aa).

The 145-residue stretch at 2 to 146 (EWTDKERAII…VVSALGKQYH (145 aa)) folds into the Globin domain. Residues His63 and His92 each contribute to the heme b site.

The protein belongs to the globin family. Hb 1 is a heterotetramer of two alpha-1 and two beta-1 chains. As to expression, red blood cells.

Its function is as follows. Involved in oxygen transport from gills to the various peripheral tissues. This Gobionotothen gibberifrons (Humped rockcod) protein is Hemoglobin subunit beta-1 (hbb1).